The chain runs to 234 residues: Aspartate/glutamate leucyltransferase (234 aa).

Belongs to the R-transferase family. Bpt subfamily.

The protein resides in the cytoplasm. The enzyme catalyses N-terminal L-glutamyl-[protein] + L-leucyl-tRNA(Leu) = N-terminal L-leucyl-L-glutamyl-[protein] + tRNA(Leu) + H(+). The catalysed reaction is N-terminal L-aspartyl-[protein] + L-leucyl-tRNA(Leu) = N-terminal L-leucyl-L-aspartyl-[protein] + tRNA(Leu) + H(+). Its function is as follows. Functions in the N-end rule pathway of protein degradation where it conjugates Leu from its aminoacyl-tRNA to the N-termini of proteins containing an N-terminal aspartate or glutamate. This is Aspartate/glutamate leucyltransferase from Hahella chejuensis (strain KCTC 2396).